A 261-amino-acid polypeptide reads, in one-letter code: MTHQTHSYHMVNPSPWPLTGALSALLMTSGLIMWFHFNSMILLTLGLSTNILTMYQWWRDIIRESTFQGHHTPTVQKGLRYGMILFIVSEVLFFTGFFWAFYHSSLAPTPELGGCWPPTGIHPLNPLEVPLLNTSVLLASGVSITWAHHSLMEGNRKHMLQALFITIALGLYFTLLQASEYYEAPFTISDGIYGSTFFVATGFHGLHVIIGSTFLIVCFLRQVKFHFTSNHHFGFERAAWYWHFVDVVWLFLYVSIYWWGS.

Over 1 to 15 (MTHQTHSYHMVNPSP) the chain is Mitochondrial matrix. The helical transmembrane segment at 16–34 (WPLTGALSALLMTSGLIMW) threads the bilayer. Residues 35–40 (FHFNSM) lie on the Mitochondrial intermembrane side of the membrane. Residues 41-66 (ILLTLGLSTNILTMYQWWRDIIREST) traverse the membrane as a helical segment. The Mitochondrial matrix portion of the chain corresponds to 67 to 72 (FQGHHT). The chain crosses the membrane as a helical span at residues 73 to 105 (PTVQKGLRYGMILFIVSEVLFFTGFFWAFYHSS). At 106 to 128 (LAPTPELGGCWPPTGIHPLNPLE) the chain is on the mitochondrial intermembrane side. Residues 129-152 (VPLLNTSVLLASGVSITWAHHSLM) traverse the membrane as a helical segment. Residues 153 to 155 (EGN) lie on the Mitochondrial matrix side of the membrane. A helical transmembrane segment spans residues 156-183 (RKHMLQALFITIALGLYFTLLQASEYYE). Topologically, residues 184 to 190 (APFTISD) are mitochondrial intermembrane. The helical transmembrane segment at 191-223 (GIYGSTFFVATGFHGLHVIIGSTFLIVCFLRQV) threads the bilayer. At 224–232 (KFHFTSNHH) the chain is on the mitochondrial matrix side. A helical transmembrane segment spans residues 233–256 (FGFERAAWYWHFVDVVWLFLYVSI). Over 257–261 (YWWGS) the chain is Mitochondrial intermembrane.

The protein belongs to the cytochrome c oxidase subunit 3 family. In terms of assembly, component of the cytochrome c oxidase (complex IV, CIV), a multisubunit enzyme composed of 14 subunits. The complex is composed of a catalytic core of 3 subunits MT-CO1, MT-CO2 and MT-CO3, encoded in the mitochondrial DNA, and 11 supernumerary subunits COX4I, COX5A, COX5B, COX6A, COX6B, COX6C, COX7A, COX7B, COX7C, COX8 and NDUFA4, which are encoded in the nuclear genome. The complex exists as a monomer or a dimer and forms supercomplexes (SCs) in the inner mitochondrial membrane with NADH-ubiquinone oxidoreductase (complex I, CI) and ubiquinol-cytochrome c oxidoreductase (cytochrome b-c1 complex, complex III, CIII), resulting in different assemblies (supercomplex SCI(1)III(2)IV(1) and megacomplex MCI(2)III(2)IV(2)).

It localises to the mitochondrion inner membrane. It carries out the reaction 4 Fe(II)-[cytochrome c] + O2 + 8 H(+)(in) = 4 Fe(III)-[cytochrome c] + 2 H2O + 4 H(+)(out). In terms of biological role, component of the cytochrome c oxidase, the last enzyme in the mitochondrial electron transport chain which drives oxidative phosphorylation. The respiratory chain contains 3 multisubunit complexes succinate dehydrogenase (complex II, CII), ubiquinol-cytochrome c oxidoreductase (cytochrome b-c1 complex, complex III, CIII) and cytochrome c oxidase (complex IV, CIV), that cooperate to transfer electrons derived from NADH and succinate to molecular oxygen, creating an electrochemical gradient over the inner membrane that drives transmembrane transport and the ATP synthase. Cytochrome c oxidase is the component of the respiratory chain that catalyzes the reduction of oxygen to water. Electrons originating from reduced cytochrome c in the intermembrane space (IMS) are transferred via the dinuclear copper A center (CU(A)) of subunit 2 and heme A of subunit 1 to the active site in subunit 1, a binuclear center (BNC) formed by heme A3 and copper B (CU(B)). The BNC reduces molecular oxygen to 2 water molecules using 4 electrons from cytochrome c in the IMS and 4 protons from the mitochondrial matrix. The polypeptide is Cytochrome c oxidase subunit 3 (MT-CO3) (Balaenoptera musculus (Blue whale)).